The sequence spans 309 residues: 2-dehydro-3-deoxygluconokinase (309 aa).

Residues 34-38, Tyr-89, 103-105, and Arg-167 each bind substrate; these read GAEVN and YYR. Residues 165 to 167, Ser-193, 219 to 225, 248 to 251, and Asn-275 contribute to the ATP site; these read NYR, KRGAKGA, and GAGD. Residue Asp-251 participates in substrate binding. The active-site Proton acceptor is the Asp-251. Asp-287 serves as a coordination point for substrate.

The protein belongs to the carbohydrate kinase pfkB family. Homohexamer; trimer of dimers.

The catalysed reaction is 2-dehydro-3-deoxy-D-gluconate + ATP = 2-dehydro-3-deoxy-6-phospho-D-gluconate + ADP + H(+). Its pathway is carbohydrate acid metabolism; 2-dehydro-3-deoxy-D-gluconate degradation; D-glyceraldehyde 3-phosphate and pyruvate from 2-dehydro-3-deoxy-D-gluconate: step 1/2. Involved in the degradation of glucose via the semi-phosphorylative Entner-Doudoroff pathway. Catalyzes the phosphorylation of 2-keto-3-deoxygluconate (KDG) to produce 2-keto-3-deoxy-6-phosphogluconate (KDPG). The polypeptide is 2-dehydro-3-deoxygluconokinase (kdgK) (Thermus thermophilus (strain ATCC 27634 / DSM 579 / HB8)).